Consider the following 607-residue polypeptide: Elongation factor 4 (607 aa).

The 183-residue stretch at 11 to 193 (ENIRNFSIIA…KIVEVVPAPD (183 aa)) folds into the tr-type G domain. GTP-binding positions include 23–28 (DHGKST) and 140–143 (NKID).

This sequence belongs to the TRAFAC class translation factor GTPase superfamily. Classic translation factor GTPase family. LepA subfamily.

The protein resides in the cell membrane. The catalysed reaction is GTP + H2O = GDP + phosphate + H(+). Required for accurate and efficient protein synthesis under certain stress conditions. May act as a fidelity factor of the translation reaction, by catalyzing a one-codon backward translocation of tRNAs on improperly translocated ribosomes. Back-translocation proceeds from a post-translocation (POST) complex to a pre-translocation (PRE) complex, thus giving elongation factor G a second chance to translocate the tRNAs correctly. Binds to ribosomes in a GTP-dependent manner. The chain is Elongation factor 4 from Staphylococcus aureus (strain MW2).